A 333-amino-acid polypeptide reads, in one-letter code: Atrochrysone carboxyl ACP thioesterase MYCFIDRAFT_190111 (333 aa).

The Zn(2+) site is built by His108, His110, Asp112, and His113. Asp112 (proton donor/acceptor) is an active-site residue.

Belongs to the metallo-beta-lactamase superfamily. Requires Zn(2+) as cofactor.

It carries out the reaction atrochrysone carboxyl-[ACP] + H2O = atrochrysone carboxylate + holo-[ACP] + H(+). Its pathway is secondary metabolite biosynthesis. Functionally, atrochrysone carboxyl ACP thioesterase; part of the gene cluster that mediates the biosynthesis of an emodin derivative that may be involved in black Sigatoka disease of banana. The pathway begins with the synthesis of atrochrysone thioester by the polyketide synthase PKS8-1. The atrochrysone carboxyl ACP thioesterase MYCFIDRAFT_190111 then breaks the thioester bond and releases the atrochrysone carboxylic acid from PKS8-1. The decarboxylase MYCFIDRAFT_34057 then catalyzes the concerted decarboxylation-elimination required to convert atochrysone carboxylic acid into emodin anthrone, which is further oxidized to emodin by the anthrone oxygenase MYCFIDRAFT_34418. The functions of the other tailoring enzymes as well as the final product of the cluster have still to be identified. In Pseudocercospora fijiensis (strain CIRAD86) (Black leaf streak disease fungus), this protein is Atrochrysone carboxyl ACP thioesterase MYCFIDRAFT_190111.